Reading from the N-terminus, the 248-residue chain is uncharacterized protein (248 aa).

This is an uncharacterized protein from Sinorhizobium fredii (strain NBRC 101917 / NGR234).